Consider the following 96-residue polypeptide: Co-chaperonin GroES (96 aa).

This sequence belongs to the GroES chaperonin family. As to quaternary structure, heptamer of 7 subunits arranged in a ring. Interacts with the chaperonin GroEL.

It is found in the cytoplasm. Its function is as follows. Together with the chaperonin GroEL, plays an essential role in assisting protein folding. The GroEL-GroES system forms a nano-cage that allows encapsulation of the non-native substrate proteins and provides a physical environment optimized to promote and accelerate protein folding. GroES binds to the apical surface of the GroEL ring, thereby capping the opening of the GroEL channel. The chain is Co-chaperonin GroES from Verminephrobacter eiseniae (strain EF01-2).